A 328-amino-acid chain; its full sequence is Carbonic anhydrase-related protein 11 (328 aa).

An N-terminal signal peptide occupies residues 1-23; the sequence is MGGAARLSAPQALVLWAALGAAA. The Alpha-carbonic anhydrase domain occupies 33-303; the sequence is DWWSYKENLQ…LAHRALRGNR (271 aa). Asparagine 118 carries N-linked (GlcNAc...) asparagine glycosylation. Residues 300–328 are disordered; it reads RGNRDPRHPERRCRGPNYRLHVDGGPHGR. A compositionally biased stretch (basic and acidic residues) spans 319–328; the sequence is LHVDGGPHGR.

The protein belongs to the alpha-carbonic anhydrase family.

The protein resides in the secreted. Does not have a catalytic activity. This chain is Carbonic anhydrase-related protein 11 (Ca11), found in Mus musculus (Mouse).